Reading from the N-terminus, the 969-residue chain is Translation initiation factor IF-2 (969 aa).

The segment at 96–377 (KRDPAEPVRA…NSRNQHQDRR (282 aa)) is disordered. Composition is skewed to low complexity over residues 105-157 (AEPA…QAEP), 167-181 (AAPAQAVAEPVEPAK), and 216-252 (PSAPAESPKSAKAEPAAAPKTTAKPGEIRRAAAPAAP). The span at 253-264 (DRAREEARRAAE) shows a compositional bias: basic and acidic residues. A compositionally biased stretch (gly residues) spans 357-366 (RAGGKGGRGG). The tr-type G domain maps to 470–637 (PRAPVVTVMG…NVLLQAEILE (168 aa)). Residues 479–486 (GHVDHGKT) are G1. 479 to 486 (GHVDHGKT) is a binding site for GTP. The G2 stretch occupies residues 504 to 508 (GITQH). The segment at 525-528 (DTPG) is G3. GTP-binding positions include 525–529 (DTPGH) and 579–582 (NKID). Positions 579 to 582 (NKID) are G4. Residues 615-617 (SAK) form a G5 region.

This sequence belongs to the TRAFAC class translation factor GTPase superfamily. Classic translation factor GTPase family. IF-2 subfamily.

It localises to the cytoplasm. In terms of biological role, one of the essential components for the initiation of protein synthesis. Protects formylmethionyl-tRNA from spontaneous hydrolysis and promotes its binding to the 30S ribosomal subunits. Also involved in the hydrolysis of GTP during the formation of the 70S ribosomal complex. The chain is Translation initiation factor IF-2 from Bordetella parapertussis (strain 12822 / ATCC BAA-587 / NCTC 13253).